We begin with the raw amino-acid sequence, 556 residues long: Optineurin (556 aa).

Residues 1–33 (MSSKPQIRPAENGEHCRSKMENGMDSMAPPTLS) form a disordered region. Basic and acidic residues predominate over residues 11–22 (ENGEHCRSKMEN). Positions 38–164 (EEMVQQMKEL…SELQVKLNIA (127 aa)) form a coiled coil. The LIR signature appears at 168–173 (DSFVEI). A coiled-coil region spans residues 219–487 (VSQLLCCLRN…LLKEQQNLED (269 aa)). Residues 245–274 (ERLSKMENETSNCLESGTQTNQEEESSEAI) form a disordered region. A compositionally biased stretch (polar residues) spans 253 to 265 (ETSNCLESGTQTN). The UBAN motif lies at 453–458 (DFHAER). The interval 496–524 (MQNRHGARAPDREHSPRLVQRGTGSQEWP) is disordered. The CCHC NOA-type zinc finger occupies 526–556 (QRNISIYSCPKCEEILPDLDTLQIHVMDCIN). Positions 534, 537, 550, and 554 each coordinate Zn(2+).

Binds to linear ubiquitin chains. Interacts with LC3 family members. In terms of tissue distribution, expressed in erythrocytes, skeletal muscle, heart, spleen and brain. Weakly expressed in lung and liver (at protein level).

The protein resides in the cytoplasm. The protein localises to the perinuclear region. It is found in the golgi apparatus. Its subcellular location is the trans-Golgi network. It localises to the cytoplasmic vesicle. The protein resides in the recycling endosome. The protein localises to the autophagosome. In terms of biological role, probably part of the TNF-alpha signaling pathway that can shift the equilibrium toward induction of cell death. May act by regulating membrane trafficking and cellular morphogenesis. May act as autophagy receptor that interacts directly with both the cargo to become degraded and an autophagy modifier of the MAP1 LC3 family. This chain is Optineurin (OPTN), found in Gallus gallus (Chicken).